Consider the following 475-residue polypeptide: 3-hydroxyadipyl-CoA dehydrogenase (475 aa).

The protein belongs to the 3-hydroxyacyl-CoA dehydrogenase family. As to quaternary structure, homotrimer.

The enzyme catalyses (3S)-3-hydroxyadipyl-CoA + NAD(+) = 3-oxoadipyl-CoA + NADH + H(+). It participates in aromatic compound metabolism; phenylacetate degradation. In terms of biological role, catalyzes the oxidation of 3-hydroxyadipyl-CoA to yield 3-oxoadipyl-CoA. In Escherichia coli (strain K12), this protein is 3-hydroxyadipyl-CoA dehydrogenase (paaH).